Reading from the N-terminus, the 425-residue chain is Dihydroorotase (425 aa).

Zn(2+) is bound by residues His-56 and His-58. Residues 58–60 and Asn-90 contribute to the substrate site; that span reads HYR. The Zn(2+) site is built by Asp-148, His-175, and His-228. Position 274 (Asn-274) interacts with substrate. Residue Asp-301 participates in Zn(2+) binding. Asp-301 is a catalytic residue. Substrate is bound by residues His-305 and 319 to 320; that span reads FG.

This sequence belongs to the metallo-dependent hydrolases superfamily. DHOase family. Class I DHOase subfamily. It depends on Zn(2+) as a cofactor.

It catalyses the reaction (S)-dihydroorotate + H2O = N-carbamoyl-L-aspartate + H(+). It functions in the pathway pyrimidine metabolism; UMP biosynthesis via de novo pathway; (S)-dihydroorotate from bicarbonate: step 3/3. In terms of biological role, catalyzes the reversible cyclization of carbamoyl aspartate to dihydroorotate. The sequence is that of Dihydroorotase from Lactobacillus delbrueckii subsp. bulgaricus (strain ATCC BAA-365 / Lb-18).